A 282-amino-acid polypeptide reads, in one-letter code: NAD-dependent protein deacetylase 1 (282 aa).

The 282-residue stretch at 1–282 (MTVGRAESPE…ADELSPLPTH (282 aa)) folds into the Deacetylase sirtuin-type domain. NAD(+)-binding positions include 25-45 (GAGI…SPPS) and 101-104 (QNVD). Histidine 119 serves as the catalytic Proton acceptor. Zn(2+)-binding residues include cysteine 127, cysteine 130, cysteine 181, and cysteine 184. NAD(+) contacts are provided by residues 221–223 (GSS), 247–249 (NRG), and cysteine 265.

It belongs to the sirtuin family. Class II subfamily. Requires Zn(2+) as cofactor.

The protein localises to the cytoplasm. The catalysed reaction is N(6)-acetyl-L-lysyl-[protein] + NAD(+) + H2O = 2''-O-acetyl-ADP-D-ribose + nicotinamide + L-lysyl-[protein]. Its function is as follows. NAD-dependent protein deacetylase which modulates the activities of several enzymes which are inactive in their acetylated form. The protein is NAD-dependent protein deacetylase 1 of Mycobacterium avium (strain 104).